A 524-amino-acid chain; its full sequence is Anthranilate synthase component 1 (524 aa).

Residues Ser-55 and 297–299 (PYM) contribute to the L-tryptophan site. Residue 332-333 (GT) participates in chorismate binding. A Mg(2+)-binding site is contributed by Glu-359. Residues Tyr-447, Arg-467, 485–487 (GAG), and Gly-487 each bind chorismate. Glu-500 serves as a coordination point for Mg(2+).

Belongs to the anthranilate synthase component I family. Heterotetramer consisting of two non-identical subunits: a beta subunit (TrpG) and a large alpha subunit (TrpE). Mg(2+) is required as a cofactor.

It carries out the reaction chorismate + L-glutamine = anthranilate + pyruvate + L-glutamate + H(+). It functions in the pathway amino-acid biosynthesis; L-tryptophan biosynthesis; L-tryptophan from chorismate: step 1/5. Feedback inhibited by tryptophan. Part of a heterotetrameric complex that catalyzes the two-step biosynthesis of anthranilate, an intermediate in the biosynthesis of L-tryptophan. In the first step, the glutamine-binding beta subunit (TrpG) of anthranilate synthase (AS) provides the glutamine amidotransferase activity which generates ammonia as a substrate that, along with chorismate, is used in the second step, catalyzed by the large alpha subunit of AS (TrpE) to produce anthranilate. In the absence of TrpG, TrpE can synthesize anthranilate directly from chorismate and high concentrations of ammonia. The protein is Anthranilate synthase component 1 (trpE) of Haloferax volcanii (strain ATCC 29605 / DSM 3757 / JCM 8879 / NBRC 14742 / NCIMB 2012 / VKM B-1768 / DS2) (Halobacterium volcanii).